The sequence spans 505 residues: Lysine--tRNA ligase (505 aa).

Mg(2+) is bound by residues Glu-415 and Glu-422.

This sequence belongs to the class-II aminoacyl-tRNA synthetase family. Homodimer. The cofactor is Mg(2+).

It is found in the cytoplasm. The catalysed reaction is tRNA(Lys) + L-lysine + ATP = L-lysyl-tRNA(Lys) + AMP + diphosphate. The chain is Lysine--tRNA ligase from Yersinia enterocolitica serotype O:8 / biotype 1B (strain NCTC 13174 / 8081).